The chain runs to 284 residues: Pseudouridine-5'-phosphate glycosidase (284 aa).

The active-site Proton donor is Glu17. Substrate is bound by residues Lys77 and Val97. Asp126 serves as a coordination point for Mn(2+). 128 to 130 (SQD) serves as a coordination point for substrate. Lys147 (nucleophile) is an active-site residue.

Belongs to the pseudouridine-5'-phosphate glycosidase family. As to quaternary structure, homotrimer. Requires Mn(2+) as cofactor.

It catalyses the reaction D-ribose 5-phosphate + uracil = psi-UMP + H2O. Functionally, catalyzes the reversible cleavage of pseudouridine 5'-phosphate (PsiMP) to ribose 5-phosphate and uracil. Functions biologically in the cleavage direction, as part of a pseudouridine degradation pathway. The sequence is that of Pseudouridine-5'-phosphate glycosidase from Thermotoga neapolitana (strain ATCC 49049 / DSM 4359 / NBRC 107923 / NS-E).